The chain runs to 380 residues: Deoxyguanosinetriphosphate triphosphohydrolase-like protein (380 aa).

A disordered region spans residues 1-28; that stretch reads MYAPYATMPDRSRGRAVPEEESSFRSPF. The HD domain maps to 62–198; sequence RLTHSIEVGQ…AALADDIAYN (137 aa).

Belongs to the dGTPase family. Type 2 subfamily.

The polypeptide is Deoxyguanosinetriphosphate triphosphohydrolase-like protein (Ruegeria sp. (strain TM1040) (Silicibacter sp.)).